We begin with the raw amino-acid sequence, 727 residues long: Sodium-dependent neutral amino acid transporter SLC6A17 (727 aa).

The Cytoplasmic segment spans residues 1–68 (MPKNSKVTQR…DRPAWNSKLQ (68 aa)). Phosphoserine occurs at positions 13 and 20. Residues 69-89 (YILAQIGFSVGLGNIWRFPYL) form a helical membrane-spanning segment. At 90–96 (CQKNGGG) the chain is on the extracellular side. The helical transmembrane segment at 97–116 (AYLVPYLVLLIIIGIPLFFL) threads the bilayer. The Cytoplasmic portion of the chain corresponds to 117 to 140 (ELAVGQRIRRGSIGVWHYVCPRLG). Residues 141 to 161 (GIGFSSCIVCLFVGLYYNVII) form a helical membrane-spanning segment. Over 162 to 224 (GWSVFYFFKS…NSISESGGLN (63 aa)) the chain is Extracellular. N-linked (GlcNAc...) asparagine glycosylation is present at asparagine 186. The helical transmembrane segment at 225-243 (WKMTVCLLVAWSIVGMAVV) threads the bilayer. Topologically, residues 244-251 (KGIQSSGK) are cytoplasmic. A helical membrane pass occupies residues 252 to 269 (VMYFSSLFPYVVLACFLV). The Extracellular portion of the chain corresponds to 270–304 (RGLLLRGAVDGILHMFTPKLDKMLDPQVWREAATQ). A helical membrane pass occupies residues 305 to 322 (VFFALGLGFGGVIAFSSY). At 323–333 (NKQDNNCHFDA) the chain is on the cytoplasmic side. Residues 334-355 (ALVSFINFFTSVLATLVVFAVL) form a helical membrane-spanning segment. Topologically, residues 356–451 (GFKANIMNEK…FIAFTEAMTH (96 aa)) are extracellular. The residue at position 377 (tyrosine 377) is a Phosphotyrosine. The N-linked (GlcNAc...) asparagine glycan is linked to asparagine 393. Residues 452 to 471 (FPASPFWSVMFFLMLINLGL) form a helical membrane-spanning segment. The Cytoplasmic segment spans residues 472-494 (GSMIGTMAGITTPIIDTFKVPKE). A helical transmembrane segment spans residues 495 to 513 (MFTVGCCVFAFFVGLLFVQ). The Extracellular portion of the chain corresponds to 514 to 528 (RSGNYFVTMFDDYSA). A helical transmembrane segment spans residues 529–549 (TLPLTVIVILENIAVAWIYGT). The Cytoplasmic portion of the chain corresponds to 550–569 (KKFMQELTEMLGFRPYRFYF). Residues 570-591 (YMWKFVSPLCMAVLTTASIIQL) form a helical membrane-spanning segment. The Extracellular portion of the chain corresponds to 592-618 (GVSPPGYSAWIKEEAAERYLYFPNWAM). Residues 619–641 (ALLITLIAVATLPIPVVFILRHF) form a helical membrane-spanning segment. Over 642 to 727 (HLLSDGSNTL…LLASTPESEL (86 aa)) the chain is Cytoplasmic. A phosphoserine mark is found at serine 665 and serine 701. The segment at 680–727 (VPSEAPSPMPTHRSYLGPGSTSPLESSSHPNGRYGSGYLLASTPESEL) is disordered. Residues 698–709 (GSTSPLESSSHP) show a composition bias toward polar residues.

The protein belongs to the sodium:neurotransmitter symporter (SNF) (TC 2.A.22) family. In terms of tissue distribution, found exclusively in the central nervous system and is more abundant in the cerebellum and the cerebral cortex. Expressed in PC-12 cell line.

It is found in the cytoplasmic vesicle. The protein resides in the secretory vesicle. The protein localises to the synaptic vesicle membrane. It localises to the postsynapse. Its subcellular location is the presynapse. It carries out the reaction L-proline(in) + Na(+)(in) = L-proline(out) + Na(+)(out). The enzyme catalyses L-leucine(in) + Na(+)(in) = L-leucine(out) + Na(+)(out). The catalysed reaction is glycine(in) + Na(+)(in) = glycine(out) + Na(+)(out). It catalyses the reaction L-alanine(in) + Na(+)(in) = L-alanine(out) + Na(+)(out). It carries out the reaction L-glutamine(in) + Na(+)(in) = L-glutamine(out) + Na(+)(out). Functionally, synaptic vesicle transporter with apparent selectivity for neutral amino acids. The transport is sodium-coupled but chloride-independent, likely driven by the proton electrochemical gradient generated by vacuolar H(+)-ATPase in an overall electrogenic mechanism. May contribute to the synaptic uptake of neurotransmitter precursors in a process coupled in part to vesicle exocytosis. In Rattus norvegicus (Rat), this protein is Sodium-dependent neutral amino acid transporter SLC6A17.